The sequence spans 212 residues: Uracil phosphoribosyltransferase (212 aa).

5-phospho-alpha-D-ribose 1-diphosphate-binding positions include R78, R103, and 130–138 (DPMLATGSS). Residues I193 and 198 to 200 (GDA) contribute to the uracil site. D199 is a binding site for 5-phospho-alpha-D-ribose 1-diphosphate.

This sequence belongs to the UPRTase family. It depends on Mg(2+) as a cofactor.

It catalyses the reaction UMP + diphosphate = 5-phospho-alpha-D-ribose 1-diphosphate + uracil. Its pathway is pyrimidine metabolism; UMP biosynthesis via salvage pathway; UMP from uracil: step 1/1. Allosterically activated by GTP. Catalyzes the conversion of uracil and 5-phospho-alpha-D-ribose 1-diphosphate (PRPP) to UMP and diphosphate. The chain is Uracil phosphoribosyltransferase from Pseudomonas syringae pv. tomato (strain ATCC BAA-871 / DC3000).